A 316-amino-acid polypeptide reads, in one-letter code: Olfactory receptor class A-like protein 1 (316 aa).

The Extracellular portion of the chain corresponds to 1–8 (MDLCVTIK). A helical transmembrane segment spans residues 9-29 (GVSFLLQAGLGILANALVLLA). Residues 30 to 39 (YAHIRLAEAR) lie on the Cytoplasmic side of the membrane. The chain crosses the membrane as a helical span at residues 40-60 (LQPVDAILCHLALVDLLLLLT). Over 61–97 (RGVPQTMTVFGMRNLLDDTGCKVVIYTYRIARALSVC) the chain is Extracellular. A disulfide bridge links cysteine 81 with cysteine 169. Residues 98–118 (ITCMLSVFQAVTVAPAAGPLL) form a helical membrane-spanning segment. Residues 119 to 132 (SGVKARLPQLLAPT) are Cytoplasmic-facing. Residues 133-153 (FAALWFINMAVCIAAPFFSVA) form a helical membrane-spanning segment. The Extracellular portion of the chain corresponds to 154 to 187 (PRNGTVPPFTLNLGFCHVDFHDNLSYVLNGVAVS). N-linked (GlcNAc...) asparagine glycosylation is found at asparagine 156 and asparagine 176. The helical transmembrane segment at 188–208 (VRDFAFVGAMLASSGFILLLL) threads the bilayer. Residues 209-233 (HRHRRQVRAVRRSQGSTMETRAART) are Cytoplasmic-facing. Residues 234 to 254 (VLMLVILYSVFFGIDNVIWIY) traverse the membrane as a helical segment. The Extracellular portion of the chain corresponds to 255–264 (MLTVAQVPPV). A helical membrane pass occupies residues 265 to 285 (VADMRVFFSSCYASLSPFLII). Residues 286 to 316 (SSNRKLKARMVCATSEQERQAEDGKNSSGKN) are Cytoplasmic-facing.

This sequence belongs to the G-protein coupled receptor 1 family. Highly expressed in the olfactory rosette where it localizes to a subset of olfactory sensory neurons, mainly in the apical region of the neuroepithelium. Not detected in other tissues tested.

The protein resides in the cell membrane. Probable pheromone receptor. Shows high specificity for 4-hydroxyphenylacetic acid. Activation of the receptor stimulates intracellular calcium release. This chain is Olfactory receptor class A-like protein 1, found in Danio rerio (Zebrafish).